The chain runs to 476 residues: Proton-coupled amino acid transporter 1 (476 aa).

Over residues 1 to 15 (MSTQRLRNEDYHDYS) the composition is skewed to basic and acidic residues. The disordered stretch occupies residues 1-32 (MSTQRLRNEDYHDYSSTDVSPEESPSEGLNNL). The Cytoplasmic portion of the chain corresponds to 1–51 (MSTQRLRNEDYHDYSSTDVSPEESPSEGLNNLSSPGSYQRFGQSNSTTWFQ). The helical transmembrane segment at 52–72 (TLIHLLKGNIGTGLLGLPLAV) threads the bilayer. Topologically, residues 73–78 (KNAGIV) are extracellular. Residues 79 to 99 (MGPISLLIIGIVAVHCMGILV) traverse the membrane as a helical segment. The Cytoplasmic portion of the chain corresponds to 100–141 (KCAHHFCRRLNKSFVDYGDTVMYGLESSPCSWLRNHAHWGRR). The helical transmembrane segment at 142-162 (VVDFFLIVTQLGFCCVYFVFL) threads the bilayer. The Extracellular portion of the chain corresponds to 163–190 (ADNFKQVIEAANGTTNNCHNNETVILTP). 2 N-linked (GlcNAc...) asparagine glycosylation sites follow: asparagine 174 and asparagine 183. The cysteines at positions 180 and 329 are disulfide-linked. The helical transmembrane segment at 191–211 (TMDSRLYMLSFLPFLVLLVFI) threads the bilayer. Over 212–215 (RNLR) the chain is Cytoplasmic. The chain crosses the membrane as a helical span at residues 216-236 (ALSIFSLLANITMLVSLVMIY). Residues 237 to 257 (QFIVQRIPDPSHLPLVAPWKT) lie on the Extracellular side of the membrane. A helical transmembrane segment spans residues 258-278 (YPLFFGTAIFSFEGIGMVLPL). Residues 279 to 289 (ENKMKDPRKFP) lie on the Cytoplasmic side of the membrane. Residues 290 to 310 (LILYLGMVIVTILYISLGCLG) form a helical membrane-spanning segment. At 311–342 (YLQFGANIQGSITLNLPNCWLYQSVKLLYSIG) the chain is on the extracellular side. The chain crosses the membrane as a helical span at residues 343–363 (IFFTYALQFYVPAEIIIPFFV). The Cytoplasmic portion of the chain corresponds to 364 to 372 (SRAPEHCEL). A helical transmembrane segment spans residues 373–393 (VVDLFVRTVLVCLTCILAILI). Topologically, residues 394-397 (PRLD) are extracellular. A helical membrane pass occupies residues 398–418 (LVISLVGSVSSSALALIIPPL). Topologically, residues 419 to 439 (LEVTTFYSEGMSPLTIFKDAL) are cytoplasmic. A helical transmembrane segment spans residues 440-460 (ISILGFVGFVVGTYEALYELI). Residues 461–476 (QPSNAPIFINSTCAFI) lie on the Extracellular side of the membrane. The N-linked (GlcNAc...) asparagine glycan is linked to asparagine 470.

It belongs to the amino acid/polyamine transporter 2 family.

It localises to the cell membrane. The protein resides in the apical cell membrane. The protein localises to the lysosome membrane. The enzyme catalyses glycine(in) + H(+)(in) = glycine(out) + H(+)(out). The catalysed reaction is L-alanine(in) + H(+)(in) = L-alanine(out) + H(+)(out). It catalyses the reaction D-alanine(in) + H(+)(in) = D-alanine(out) + H(+)(out). It carries out the reaction L-proline(out) + H(+)(out) = L-proline(in) + H(+)(in). The enzyme catalyses D-proline(out) + H(+)(out) = D-proline(in) + H(+)(in). The catalysed reaction is D-serine(out) + H(+)(out) = D-serine(in) + H(+)(in). It catalyses the reaction L-serine(in) + H(+)(in) = L-serine(out) + H(+)(out). It carries out the reaction 4-aminobutanoate(in) + H(+)(in) = 4-aminobutanoate(out) + H(+)(out). The enzyme catalyses beta-alanine(in) + H(+)(in) = beta-alanine(out) + H(+)(out). Its function is as follows. Electrogenic proton/amino acid symporter with selectivity for small apolar L-amino acids, their D-enantiomers and selected amino acid derivatives such as 4-aminobutanoate/GABA. May be involved in the efflux from the lysosomal compartment of neutral amino acids resulting from proteolysis. May play a role in specifying sites for exocytosis in neurons. The sequence is that of Proton-coupled amino acid transporter 1 from Homo sapiens (Human).